The sequence spans 779 residues: Lon protease (779 aa).

The Lon N-terminal domain occupies 10 to 203 (LPLLPLRGLL…ILLTILNNER (194 aa)). 355–362 (GPPGVGKT) contributes to the ATP binding site. A Lon proteolytic domain is found at 591–772 (KDQVGSVTGL…DEVLRHALTK (182 aa)). Residues Ser-678 and Lys-721 contribute to the active site.

This sequence belongs to the peptidase S16 family. Homohexamer. Organized in a ring with a central cavity.

It localises to the cytoplasm. It catalyses the reaction Hydrolysis of proteins in presence of ATP.. Its function is as follows. ATP-dependent serine protease that mediates the selective degradation of mutant and abnormal proteins as well as certain short-lived regulatory proteins. Required for cellular homeostasis and for survival from DNA damage and developmental changes induced by stress. Degrades polypeptides processively to yield small peptide fragments that are 5 to 10 amino acids long. Binds to DNA in a double-stranded, site-specific manner. This Brevibacillus choshinensis protein is Lon protease.